The primary structure comprises 146 residues: Hemoglobin subunit beta (146 aa).

At V1 the chain carries N-acetylvaline. The 145-residue stretch at H2 to H146 folds into the Globin domain. H63 lines the heme b pocket. Position 82 is an N6-acetyllysine (K82). Position 92 (H92) interacts with heme b. C93 is modified (S-nitrosocysteine). K144 is subject to N6-acetyllysine.

Belongs to the globin family. In terms of assembly, heterotetramer of two alpha chains and two beta chains. Red blood cells.

Its function is as follows. Involved in oxygen transport from the lung to the various peripheral tissues. The sequence is that of Hemoglobin subunit beta (HBB) from Mesocricetus brandti (Brandt's hamster).